The following is a 316-amino-acid chain: tRNA selenocysteine 1-associated protein 1-like (316 aa).

2 consecutive RRM domains span residues T6–Y89 and F99–N178. A compositionally biased stretch (pro residues) spans P239–P248. A disordered region spans residues P239–M285.

Belongs to the RRM TRSPAP family.

The protein localises to the nucleus. It is found in the cytoplasm. In terms of biological role, involved in the early steps of selenocysteine biosynthesis and tRNA(Sec) charging to the later steps resulting in the cotranslational incorporation of selenocysteine into selenoproteins. This Danio rerio (Zebrafish) protein is tRNA selenocysteine 1-associated protein 1-like (trnau1apl).